The following is a 1499-amino-acid chain: Pleiotropic ABC efflux transporter of multiple drugs CDR1 (1499 aa).

Over residues 1 to 11 (MSLASDKKDAD) the composition is skewed to basic and acidic residues. The disordered stretch occupies residues 1 to 29 (MSLASDKKDADVASTTTTAQDDDNLSTYH). N24, N96, and N99 each carry an N-linked (GlcNAc...) asparagine glycan. The region spanning 146–399 (VYNTVVPSTA…FQKMGYVSPE (254 aa)) is the ABC transporter 1 domain. Phosphoserine is present on S307. An N-linked (GlcNAc...) asparagine glycan is attached at N323. Position 484 is a phosphoserine (S484). A helical membrane pass occupies residues 510–530 (GVTLFMVIGNSSMAFILGSMF). N537 carries an N-linked (GlcNAc...) asparagine glycan. 5 helical membrane-spanning segments follow: residues 548–568 (AMFFAVLFNAFSSLLEIFSLF), 597–617 (VPAKLITAVCFNIIYYFLVNF), 622–642 (GVFFFYFLINIVAVFAMSHLF), 654–674 (AAMVPASMLLLGLSMYSGFAI), and 763–783 (GFGIGLAYVIFFLVLYLILCE). A glycan (N-linked (GlcNAc...) asparagine) is linked at N813. Positions 857–1099 (FHWRNLCYDV…TMIDYFESHG (243 aa)) constitute an ABC transporter 2 domain. 893–900 (GASGAGKT) contributes to the ATP binding site. A glycan (N-linked (GlcNAc...) asparagine) is linked at N1159. The next 3 membrane-spanning stretches (helical) occupy residues 1193–1213 (YLWSKFFLTIFNNIFIGFTFF), 1228–1248 (AVFMFTVIFNPLLQQYLPSFV), and 1278–1298 (IPWNILAGTVAFVIYYYAIGF). An N-linked (GlcNAc...) asparagine glycan is attached at N1301. 2 consecutive transmembrane segments (helical) span residues 1314–1334 (LFWLFSCAFYVYIGSLALFCI) and 1342–1362 (AAANMASLMFTLSLSFCGVLV). N1412 is a glycosylation site (N-linked (GlcNAc...) asparagine). Residues 1466-1486 (WGIFICYIAFNYIAGIFLYWL) traverse the membrane as a helical segment.

It belongs to the ABC transporter superfamily. Post-translationally, phosphorylated at Ser-307 and Ser-484. Ser-307 and Ser-484 are dephosphorylated on glucose depletion and independently rephosphorylated during glucose exposure or under stress.

The protein resides in the cell membrane. With respect to regulation, inhibited by clorgyline. Inhibited by RC21v3, a 4-methoxy-2,3,6-trimethylbenzenesulphonyl derivative of the D-octapeptide D-FFKWQRRR, via the interaction with the ectodomain. FK506, enniatin, milbemycin alpha-11, and milbemycin beta-9 also inhibit CDR1 activity. Inhibited by milbemycin A3/A4 oxim derivatives. In terms of biological role, pleiotropic ABC efflux transporter that transports and confers resistance to structurally and functionally unrelated compounds including rhodamine 6G, Nile red, caspofungin, cycloheximide, or azoles such as fluconazole, itraconazole, ketoconazole, posaconazole, voriconazole, and isavuconazole. Chlorbromuron, itraconazole, yohimbine, ketoconazole, miconazole, clotrimazole, DE-11, tamoxifen, quinidine, verapamil can compete for rhodamine 6G's binding site(s) while compounds such as propanil, chloramphenicol, benomyl, voriconazole, tritylimidazole, ketoconazole, miconazole, tamoxifen, gefitinib shared binding site(s) with fluconazole. Nile red mediated efflux appears to be relatively more specific since only five compounds such as ZW3-12, rhodamine 123, miconazole, clotrimazole, and itraconazole can inhibit its accumulation. Does not use as substrates 4-nitroquinoline 1-oxide (4-NQO) and disulfiram. Does not play a role in the azole resistance in mature biofilms. This Candida glabrata (strain ATCC 2001 / BCRC 20586 / JCM 3761 / NBRC 0622 / NRRL Y-65 / CBS 138) (Yeast) protein is Pleiotropic ABC efflux transporter of multiple drugs CDR1.